A 552-amino-acid polypeptide reads, in one-letter code: Thermosome subunit beta (552 aa).

This sequence belongs to the TCP-1 chaperonin family. In terms of assembly, forms a Heterooligomeric complex of two stacked nine-membered rings; one of alpha and the other of beta subunits. In terms of processing, the N-terminus is blocked.

In terms of biological role, molecular chaperone; binds unfolded polypeptides in vitro, and has a weak ATPase activity. This chain is Thermosome subunit beta (thsB), found in Sulfurisphaera tokodaii (strain DSM 16993 / JCM 10545 / NBRC 100140 / 7) (Sulfolobus tokodaii).